Here is a 210-residue protein sequence, read N- to C-terminus: Probable GTP-binding protein EngB (210 aa).

The 175-residue stretch at 30-204 (QGYEVAFAGR…YKVLAGWMEL (175 aa)) folds into the EngB-type G domain. GTP contacts are provided by residues 38 to 45 (GRSNAGKS), 64 to 68 (GRTQL), 82 to 85 (DLPG), 149 to 152 (TKAD), and 182 to 185 (LFSA). Positions 45 and 66 each coordinate Mg(2+).

Belongs to the TRAFAC class TrmE-Era-EngA-EngB-Septin-like GTPase superfamily. EngB GTPase family. Mg(2+) serves as cofactor.

In terms of biological role, necessary for normal cell division and for the maintenance of normal septation. This is Probable GTP-binding protein EngB from Pseudomonas putida (strain W619).